The primary structure comprises 610 residues: Zinc finger protein 823 (610 aa).

The region spanning 4–97 is the KRAB domain; that stretch reads VAFEDVAVNF…VNKNTPRVNP (94 aa). 10 C2H2-type zinc fingers span residues 164–186, 192–214, 220–242, 248–270, 276–298, 304–326, 332–354, 360–382, 388–410, and 416–438; these read FDCK…MAAH, YKCK…ERTH, YECK…ERIH, YECK…ERTH, YKCT…ERTH, YACK…MIRH, HKCK…ETTH, YECK…MITH, QKCK…ERTH, and YQCK…EATH. The C2H2-type 11; atypical zinc-finger motif lies at 444 to 465; it reads YKCQCGKAFSDLSSFQNHETTH. 5 C2H2-type zinc fingers span residues 471–493, 499–521, 527–549, 555–577, and 583–605; these read YECK…KRTH, YECK…ERIH, and YECL…EKTH.

Belongs to the krueppel C2H2-type zinc-finger protein family.

The protein localises to the nucleus. Functionally, may be involved in transcriptional regulation. This is Zinc finger protein 823 (ZNF823) from Homo sapiens (Human).